A 663-amino-acid polypeptide reads, in one-letter code: MDPAAPATRMTSSFTINISTPSFYNPPKKFAPVVPPKPKINPFKAPEEPQSLVPQENSAGPGLHQAFVGKVGEMPPGVDHDDFVLPPPPPSEESISPPSSSFPPPPPSFGDEGLGSPSGGSFPPPPPPEFSEPFPPPIEEFFPSPPPLEECVSDTQDLPVPVPPPPPPPLPSPPAAPPPKPSAPCEAPKPAPVFPKSSPPPAFPKPEPPSVAPKAASSIFIPKPSAPMAVAPKPLAPPPVAAKPSGPVSFAPPSPAPHTFSPDPSAPAHTFSPKTVTFSPKSAPHTFMPKPSAPVTYPQKTTEPPAEASQSSPKVTPAAKHEAPPPTVPSGGRAPGFSFAQQRERPRVLEKPRANLQGSEPEHEPTVEVQVERTRSLGPQTESGRSPGAQSTGGKDMKPLPEGLRSQKPMSDGIHRTGGQHSGHKVTGQQDQTLGSQGLNMKEVEELEMLTQQLMREMDKPPTAEAHSMELCGFCGRGLSRTETVVRAGEHLYHVACFTCSRCDQQLQGQQYYESAGKPLCDECYQDTLECCAVCDKKITERLLKAIGKSYHPSCFTCAVCKCSLQGEPFIVDDNKLPHCVNDYHRRYAPRCCVCGDPIAPEPGRDETVRVVALEKNFHMMCYKCEDCGCPLSIEADDAGCFPLDGHVLCKKCHTVRARAALG.

Residues 35-438 (PPKPKINPFK…QQDQTLGSQG (404 aa)) are disordered. 2 stretches are compositionally biased toward pro residues: residues 122–148 (FPPP…PPPL) and 160–211 (VPVP…PPSV). Residues 298–314 (PQKTTEPPAEASQSSPK) show a composition bias toward polar residues. Composition is skewed to basic and acidic residues over residues 342–353 (QRERPRVLEKPR) and 360–375 (EPEH…ERTR). 2 stretches are compositionally biased toward polar residues: residues 377–393 (LGPQ…QSTG) and 427–438 (TGQQDQTLGSQG). 3 LIM zinc-binding domains span residues 470–531 (ELCG…TLEC), 532–589 (CAVC…RRYA), and 590–660 (PRCC…RARA).

Belongs to the zyxin/ajuba family. In terms of assembly, interacts (via LIM2 domain) with hesx1/anf1. As to expression, at the early gastrula stage, expressed at a low level in the animal hemisphere. Expression rises by the end of gastrulation in the anterior part of the embryo, where it gradually increases by the midneurula stage. During neurulation, expression continues most intensively in the anterior part of the neural plate and around it. At later stages, intensely expressed in the brain and at lower levels in the spinal cord, eyes, nasal placodes, within somites, and around the cement gland.

It is found in the cytoplasm. Its subcellular location is the cytoskeleton. It localises to the cell junction. The protein resides in the focal adhesion. Adhesion plaque protein. May be a component of a signal transduction pathway that mediates adhesion-stimulated changes in gene expression. Suppresses the transcription-repressing activity of hesx1/anf1. The protein is Zyxin of Xenopus laevis (African clawed frog).